A 472-amino-acid polypeptide reads, in one-letter code: Homeobox protein PKNOX2 (472 aa).

The interval 1 to 62 is disordered; the sequence is MMQHASPAPA…STPVPSAPID (62 aa). Residues 26 to 38 show a composition bias toward polar residues; it reads DSPQMTATTQPPS. The span at 46–56 shows a compositional bias: low complexity; the sequence is SAPSAAASTPV. Residues 96–179 enclose the MEIS N-terminal domain; sequence GSECITSASF…MHSDNLLRND (84 aa). Residues 291–350 constitute a DNA-binding region (homeobox); it reads KRGVLPKHATNIMRSWLFQHLMHPYPTEDEKRQIAAQTNLTLLQVNNWFVNARRRILQPM. 3 disordered regions span residues 351-371, 386-405, and 423-472; these read LDAS…QHRP, QQQG…LDNL, and AAHD…DSLV. Basic residues predominate over residues 361–371; the sequence is KAKKIKSQHRP. A compositionally biased stretch (polar residues) spans 396 to 405; that stretch reads PDGSINLDNL. Positions 429 to 454 are enriched in acidic residues; the sequence is LDGTEEEDEDEMEEEEEEELEEEVDE.

Belongs to the TALE/MEIS homeobox family.

It localises to the nucleus. In Pongo abelii (Sumatran orangutan), this protein is Homeobox protein PKNOX2 (PKNOX2).